The sequence spans 846 residues: Neurofilament medium polypeptide (846 aa).

Residues 1-10 show a composition bias toward polar residues; it reads MSYTLDSLGN. The interval 1–52 is disordered; sequence MSYTLDSLGNPSAYRRVPTETRSSFSRVSGSPSSGFRSQSWSRGSPSTVSSS. At Ser2 the chain carries N-acetylserine. The head stretch occupies residues 2-104; sequence SYTLDSLGNP…LSRSNEKEQL (103 aa). The span at 22-45 shows a compositional bias: low complexity; sequence RSSFSRVSGSPSSGFRSQSWSRGS. Residue Ser31 is modified to Phosphoserine. Omega-N-methylarginine is present on Arg43. Thr48 carries O-linked (GlcNAc) threonine glycosylation. Ser98 is subject to Phosphoserine. The IF rod domain maps to 100–411; it reads EKEQLQGLND…KLLEGEETRF (312 aa). The coil 1A stretch occupies residues 104–135; it reads LQGLNDRFAGYIEKVHYLEQQNKEIEAEIHAL. A linker 1 region spans residues 136–148; sequence RQKQASHAQLGDA. The segment at 149–247 is coil 1B; it reads YDQEIRELRA…EEEVADLLAQ (99 aa). Ser225 carries the phosphoserine modification. The segment at 248–264 is linker 12; sequence IQASHITVERKDYLKTD. A coil 2A region spans residues 265–286; the sequence is ISTALKEIRSQLECHSDQNMHQ. Residues 287-290 are linker 2; it reads AEEW. Residues 291–411 are coil 2B; the sequence is FKCRYAKLTE…KLLEGEETRF (121 aa). Tyr319 bears the Phosphotyrosine mark. A phosphoserine mark is found at Ser345, Ser417, and Ser429. The tract at residues 412–845 is tail; the sequence is STFSGSITGP…HAIVKEVTQG (434 aa). O-linked (GlcNAc) threonine glycosylation occurs at Thr431. Phosphoserine is present on residues Ser467 and Ser483. The segment at 483–783 is disordered; sequence SAKEEKEEAE…GEDRSDDKVV (301 aa). The segment covering 489–499 has biased composition (acidic residues); the sequence is EEAEEKEEEPE. Over residues 500-510 the composition is skewed to basic and acidic residues; it reads VEKSPVKSPEA. 2 positions are modified to phosphoserine: Ser503 and Ser507. A compositionally biased stretch (acidic residues) spans 511–533; it reads KEEEEGEKEEEEEGQEEEEEEDE. Positions 534 to 553 are enriched in basic and acidic residues; that stretch reads GVKSDQAEEGGSEKEGSSEK. A phosphoserine mark is found at Ser537, Ser545, Ser550, and Ser551. Residues 554-575 are compositionally biased toward acidic residues; the sequence is DEGEQEEEGETEAEGEGEEAEA. Thr564 carries the phosphothreonine modification. The segment covering 576–603 has biased composition (basic and acidic residues); that stretch reads KEEKKTEGKVEEMAIKEEIKVEKPEKAK. A phosphoserine mark is found at Ser604, Ser609, Ser643, Ser667, Ser687, Ser713, Ser721, Ser751, and Ser767. 2 stretches are compositionally biased toward basic and acidic residues: residues 610 to 675 and 687 to 709; these read PVEE…KAVE and SLEKDTKEEKPQQQEKVKEKAEE. Basic and acidic residues-rich tracts occupy residues 718 to 730 and 746 to 758; these read GDKSPQESKKEDI and TQEKGSGQEEEKG. Residues 769 to 783 show a composition bias toward basic and acidic residues; it reads AEEKKGEDRSDDKVV.

It belongs to the intermediate filament family. In terms of assembly, forms heterodimers with NEFL; which can further hetero-oligomerize (in vitro). Forms heterodimers with INA (in vitro). Post-translationally, there are a number of repeats of the tripeptide K-S-P, NFM is phosphorylated on a number of the serines in this motif. It is thought that phosphorylation of NFM results in the formation of interfilament cross bridges that are important in the maintenance of axonal caliber. Phosphorylation seems to play a major role in the functioning of the larger neurofilament polypeptides (NF-M and NF-H), the levels of phosphorylation being altered developmentally and coincidentally with a change in the neurofilament function. In terms of processing, phosphorylated in the head and rod regions by the PKC kinase PKN1, leading to the inhibition of polymerization. Expressed in the dorsal root ganglion neurons (at protein level).

Its subcellular location is the cytoplasm. The protein localises to the cytoskeleton. It localises to the cell projection. It is found in the axon. Its function is as follows. Neurofilaments usually contain three intermediate filament proteins: NEFL, NEFM, and NEFH which are involved in the maintenance of neuronal caliber. May additionally cooperate with the neuronal intermediate filament proteins PRPH and INA to form neuronal filamentous networks. The protein is Neurofilament medium polypeptide (Nefm) of Rattus norvegicus (Rat).